A 332-amino-acid polypeptide reads, in one-letter code: MGFGDFTGLCRMAPLPLCSSVGPITSIASGVGIEPDCYARNIEVANTIIFQGAASAMHIIALVMTVVMILHVRGKFTAVGRKEITTFFYLYMLLTFLSLCVDAGVVPPGSAPYPYFVAVQAGLASATVTCLMINGFVGFQLYEDGTPLSLWMMRLCSAAAFVISFLVALATFKTWAGLGPTNTIGLFVVLYLLNAVQLFVYVVLQVLLVMRTLHDRWPLGDIAFGMFFFVAGQVILYAASAPICKAISHYLDGLFFATTCNLLAVMMVYKYWDSITKEDLEFSVGTRMNNWEVKDLLPEEDRRATVYHDDPYGQSTAYDNSYSPSPNRHSRY.

Helical transmembrane passes span Gly52–Val72, Phe87–Pro107, Phe116–Phe136, Ala158–Leu178, Ile184–Leu204, Leu219–Ala239, and His249–Tyr269. The segment at Asp309–Tyr332 is disordered. Positions Gly313–Tyr332 are enriched in polar residues.

This sequence belongs to the CHS7 family. Interacts with CHS3.

The protein resides in the endoplasmic reticulum membrane. Its function is as follows. Chaperone required for the export of the chitin synthase CHS3 from the endoplasmic reticulum. This Chaetomium globosum (strain ATCC 6205 / CBS 148.51 / DSM 1962 / NBRC 6347 / NRRL 1970) (Soil fungus) protein is Chitin synthase export chaperone (CHS7).